Consider the following 334-residue polypeptide: Glyceraldehyde-3-phosphate dehydrogenase 1 (334 aa).

NAD(+) is bound by residues 12–13 (RI), Asp-35, and Arg-79. Residues 152–154 (SCT), Thr-183, Arg-198, 211–212 (SG), and Arg-234 contribute to the D-glyceraldehyde 3-phosphate site. Cys-153 serves as the catalytic Nucleophile. Asn-315 lines the NAD(+) pocket.

The protein belongs to the glyceraldehyde-3-phosphate dehydrogenase family. As to quaternary structure, homotetramer.

The protein resides in the cytoplasm. It carries out the reaction D-glyceraldehyde 3-phosphate + phosphate + NAD(+) = (2R)-3-phospho-glyceroyl phosphate + NADH + H(+). Its pathway is carbohydrate degradation; glycolysis; pyruvate from D-glyceraldehyde 3-phosphate: step 1/5. Resistant to pentalenolactone. Functionally, catalyzes the oxidative phosphorylation of glyceraldehyde 3-phosphate (G3P) to 1,3-bisphosphoglycerate (BPG) using the cofactor NAD. The first reaction step involves the formation of a hemiacetal intermediate between G3P and a cysteine residue, and this hemiacetal intermediate is then oxidized to a thioester, with concomitant reduction of NAD to NADH. The reduced NADH is then exchanged with the second NAD, and the thioester is attacked by a nucleophilic inorganic phosphate to produce BPG. The polypeptide is Glyceraldehyde-3-phosphate dehydrogenase 1 (gap1) (Streptomyces avermitilis (strain ATCC 31267 / DSM 46492 / JCM 5070 / NBRC 14893 / NCIMB 12804 / NRRL 8165 / MA-4680)).